The following is an 80-amino-acid chain: Protein Vpu (80 aa).

Over 1-6 (MQSLIA) the chain is Extracellular. A helical transmembrane segment spans residues 7-27 (AIVALVVVAIIAIVVWSIVFI). Residues 28-80 (EYRKILRQRKIDRLIDRIRERAEDSGNESEGDQEELSALVEMGHDAPWDIDDL) lie on the Cytoplasmic side of the membrane. The tract at residues 49–80 (AEDSGNESEGDQEELSALVEMGHDAPWDIDDL) is disordered. A phosphoserine; by host CK2 mark is found at Ser-52 and Ser-56. Residues 52-62 (SGNESEGDQEE) are compositionally biased toward acidic residues.

This sequence belongs to the HIV-1 VPU protein family. Homopentamer. Interacts with host CD4 and BRTC; these interactions induce proteasomal degradation of CD4. Interacts with host BST2; this interaction leads to the degradation of host BST2. Interacts with host FBXW11. Interacts with host AP1M1; this interaction plays a role in the mistrafficking and subsequent degradation of host BST2. Interacts with host RANBP2; this interaction allows Vpu to down-regulate host BLM sumoylation. In terms of processing, phosphorylated by host CK2. This phosphorylation is necessary for interaction with human BTRC and degradation of CD4.

It localises to the host membrane. With respect to regulation, ion channel activity is inhibited by hexamethylene amiloride in vitro. Its function is as follows. Enhances virion budding by targeting host CD4 and Tetherin/BST2 to proteasome degradation. Degradation of CD4 prevents any unwanted premature interactions between viral Env and its host receptor CD4 in the endoplasmic reticulum. Degradation of antiretroviral protein Tetherin/BST2 is important for virion budding, as BST2 tethers new viral particles to the host cell membrane. Mechanistically, Vpu bridges either CD4 or BST2 to BTRC, a substrate recognition subunit of the Skp1/Cullin/F-box protein E3 ubiquitin ligase, induces their ubiquitination and subsequent proteasomal degradation. The alteration of the E3 ligase specificity by Vpu seems to promote the degradation of host IKBKB, leading to NF-kappa-B down-regulation and subsequent apoptosis. Acts as a viroporin that forms an oligomeric ion channel in membranes. Modulates the host DNA repair mechanisms to promote degradation of nuclear viral cDNA in cells that are already productively infected in order to suppress immune sensing and proviral hyper-integration (superinfection). Manipulates PML-NBs and modulates SUMOylation of host BLM protein thereby enhancing its DNA-end processing activity toward viral unintegrated linear DNA. Also inhibits RAD52-mediated homologous repair of viral cDNA, preventing the generation of dead-end circular forms of single copies of the long terminal repeat and permitting sustained nucleolytic attack. The protein is Protein Vpu of Human immunodeficiency virus type 1 group M subtype B (isolate JH32) (HIV-1).